The chain runs to 653 residues: Macrolide export ATP-binding/permease protein MacB (653 aa).

The 239-residue stretch at 6–244 (LQLTRVTRRF…DAASGASGDA (239 aa)) folds into the ABC transporter domain. 42–49 (GASGSGKS) is an ATP binding site. 4 consecutive transmembrane segments (helical) span residues 278-298 (LLTM…VAIG), 526-546 (LTLL…IGVM), 587-607 (MGGA…SLFV), and 616-636 (AGSI…FGFM).

Belongs to the ABC transporter superfamily. Macrolide exporter (TC 3.A.1.122) family. As to quaternary structure, homodimer.

It is found in the cell inner membrane. Non-canonical ABC transporter that contains transmembrane domains (TMD), which form a pore in the inner membrane, and an ATP-binding domain (NBD), which is responsible for energy generation. Confers resistance against macrolides. This chain is Macrolide export ATP-binding/permease protein MacB, found in Burkholderia thailandensis (strain ATCC 700388 / DSM 13276 / CCUG 48851 / CIP 106301 / E264).